The sequence spans 523 residues: Ribonuclease Y (523 aa).

Residues 7-24 (LSSLASALLAGGGTYLVY) traverse the membrane as a helical segment. One can recognise a KH domain in the interval 213 to 279 (LINVVNLPND…TRTIEALVED (67 aa)). Residues 339–432 (ALGHSLEVAN…VCAADALSAA (94 aa)) enclose the HD domain.

Belongs to the RNase Y family.

It is found in the cell membrane. In terms of biological role, endoribonuclease that initiates mRNA decay. In Wolinella succinogenes (strain ATCC 29543 / DSM 1740 / CCUG 13145 / JCM 31913 / LMG 7466 / NCTC 11488 / FDC 602W) (Vibrio succinogenes), this protein is Ribonuclease Y.